The following is a 140-amino-acid chain: Zinc finger SWIM domain-containing protein 7 (140 aa).

Residues 66 to 114 (YQVLGSSSKTYTCLASCHYCSCPAFAFSVLRKSDSILCKHLLAVYLSQV) form an SWIM-type zinc finger.

The protein belongs to the SWS1 family. In terms of assembly, interacts with RAD51D and XRCC3; involved in homologous recombination repair. Interacts with SWSAP1; they form a functional complex involved in homologous recombination repair and stabilize each other. In terms of tissue distribution, expressed in ovary and testis.

Its subcellular location is the nucleus. Functionally, involved in early stages of the homologous recombination repair (HRR) pathway of double-stranded DNA breaks arising during DNA replication or induced by DNA-damaging agents. Required for meiotic progression, hence for fertility. The sequence is that of Zinc finger SWIM domain-containing protein 7 (ZSWIM7) from Homo sapiens (Human).